A 90-amino-acid chain; its full sequence is Phosphoribosyl-ATP pyrophosphatase (90 aa).

This sequence belongs to the PRA-PH family.

The protein localises to the cytoplasm. It catalyses the reaction 1-(5-phospho-beta-D-ribosyl)-ATP + H2O = 1-(5-phospho-beta-D-ribosyl)-5'-AMP + diphosphate + H(+). It functions in the pathway amino-acid biosynthesis; L-histidine biosynthesis; L-histidine from 5-phospho-alpha-D-ribose 1-diphosphate: step 2/9. This chain is Phosphoribosyl-ATP pyrophosphatase (hisE), found in Streptomyces coelicolor (strain ATCC BAA-471 / A3(2) / M145).